The primary structure comprises 499 residues: NADH-quinone oxidoreductase subunit 14 (499 aa).

14 helical membrane-spanning segments follow: residues 9–29, 37–57, 76–96, 104–124, 126–146, 161–181, 196–216, 235–255, 269–289, 301–321, 324–344, 369–389, 402–422, and 446–466; these read ILPE…GAYL, TLLW…GLGN, FAKV…ADYM, FEFP…VSAG, LLTL…VAAM, FVLG…VYGF, AGHL…GLSF, PTPV…ALIA, WSQI…IAGI, SSIA…AIGV, MLLY…FILS, ALAM…LGFF, GMGW…FYYL, and YLAL…MFGV.

It belongs to the complex I subunit 2 family. In terms of assembly, NDH-1 is composed of at least 14 different subunits, Nqo1 to Nqo14. The complex has a L-shaped structure, with the hydrophobic arm (subunits Nqo7, Nqo8, Nqo10 to Nqo14) embedded in the inner membrane and the hydrophilic peripheral arm (subunits Nqo1 to Nqo6, Nqo9) protruding into the bacterial cytoplasm. The hydrophilic domain contains all the redox centers.

The protein localises to the cell inner membrane. It catalyses the reaction a quinone + NADH + 5 H(+)(in) = a quinol + NAD(+) + 4 H(+)(out). Functionally, NDH-1 shuttles electrons from NADH, via FMN and iron-sulfur (Fe-S) centers, to quinones in the respiratory chain. The immediate electron acceptor for the enzyme in this species is believed to be ubiquinone. Couples the redox reaction to proton translocation (for every two electrons transferred, four hydrogen ions are translocated across the cytoplasmic membrane), and thus conserves the redox energy in a proton gradient. This Paracoccus denitrificans protein is NADH-quinone oxidoreductase subunit 14.